Here is a 169-residue protein sequence, read N- to C-terminus: Putative phosphoesterase SAR0985 (169 aa).

H34 serves as the catalytic Proton donor. 2 consecutive short sequence motifs (HXTX) follow at residues 34–37 (HVTI) and 115–118 (HFTI). H115 acts as the Proton acceptor in catalysis.

Belongs to the 2H phosphoesterase superfamily. YjcG family.

This is Putative phosphoesterase SAR0985 from Staphylococcus aureus (strain MRSA252).